The primary structure comprises 551 residues: Palmdelphin (551 aa).

N-acetylmethionine is present on M1. The stretch at 2–106 forms a coiled coil; that stretch reads EEAELVKERL…LQISTNEEAI (105 aa). K125 is covalently cross-linked (Glycyl lysine isopeptide (Lys-Gly) (interchain with G-Cter in SUMO2)). At S135 the chain carries Phosphoserine. A Glycyl lysine isopeptide (Lys-Gly) (interchain with G-Cter in SUMO1); alternate cross-link involves residue K179. K179 is covalently cross-linked (Glycyl lysine isopeptide (Lys-Gly) (interchain with G-Cter in SUMO2); alternate). A compositionally biased stretch (basic and acidic residues) spans 247 to 259; the sequence is SERNSKSPTEYHD. Disordered regions lie at residues 247–393 and 450–529; these read SERN…EDEE and EEEE…IAGD. A Phosphothreonine modification is found at T271. A phosphoserine mark is found at S321, S370, S384, and S385. The segment covering 484–495 has biased composition (basic and acidic residues); the sequence is KRAEVNPHENTN. Phosphoserine occurs at positions 498, 515, and 520.

Belongs to the paralemmin family. As to quaternary structure, interacts with GLUL. Cell projection, dendrite. Cell projection, dendritic spine. In terms of processing, phosphorylated.

It localises to the cytoplasm. The protein resides in the cell projection. Its subcellular location is the dendrite. It is found in the dendritic spine. The polypeptide is Palmdelphin (PALMD) (Sus scrofa (Pig)).